A 312-amino-acid chain; its full sequence is uncharacterized protein (312 aa).

It belongs to the asfivirus CP312R family.

Its subcellular location is the virion. This is an uncharacterized protein from African swine fever virus (isolate Warthog/Namibia/Wart80/1980) (ASFV).